Consider the following 409-residue polypeptide: Type II methyltransferase M.BsuFI (409 aa).

The SAM-dependent MTase C5-type domain maps to 101–402 (LTFIDLFAGI…GAMKERLLLA (302 aa)). Cysteine 170 is a catalytic residue.

It belongs to the class I-like SAM-binding methyltransferase superfamily. C5-methyltransferase family.

It carries out the reaction a 2'-deoxycytidine in DNA + S-adenosyl-L-methionine = a 5-methyl-2'-deoxycytidine in DNA + S-adenosyl-L-homocysteine + H(+). Functionally, a methylase, recognizes the double-stranded sequence 5'-CCGG-3', methylates C-1 on both strands, and protects the DNA from cleavage by the BsuFI endonuclease. This chain is Type II methyltransferase M.BsuFI (hsdFM), found in Bacillus subtilis.